We begin with the raw amino-acid sequence, 426 residues long: MDDSFDIYEIKARQVLDSRGNPTVEAEVLTAGGGYGHTIVPSGASTGTFEAVELRDKKEKYGGKSVLNAVSNVNDIIAQELIGEDARNQRLIDQIMLNLDGTENKGNLGANAILAVSLAVAKAAADTASLPLYKYIGGSNAYVMPAPMMNVLNGGQHAGNALDFQEFMIMPVGADSFAEAVRMCSETYQSLKKVVAEKYGKDAVNVGDEGGFAPPVKTIDEALAVLLEGVKKAGYEDEIVFTIDSAASEFYDEKSGSYMIAGEKVSTDKLIDIYKEMVEQYPIVSIEDPLFEEDFEGFKTATKELKGIQIVGDDLFVTNTKRLKKGIEMGAANSLLLKVNQIGTLSESIDAANMAFRNGYSLVVSHRSGESEDSTIADLAVALNAGQIKTGAPARGERTAKYNQLMRIEEELQISKYAGKDFKIPF.

Residue glutamine 165 coordinates (2R)-2-phosphoglycerate. Glutamate 209 functions as the Proton donor in the catalytic mechanism. Mg(2+) contacts are provided by aspartate 244, glutamate 287, and aspartate 313. (2R)-2-phosphoglycerate-binding residues include lysine 338, arginine 367, serine 368, and lysine 389. The active-site Proton acceptor is the lysine 338.

This sequence belongs to the enolase family. It depends on Mg(2+) as a cofactor.

It localises to the cytoplasm. Its subcellular location is the secreted. The protein resides in the cell surface. It catalyses the reaction (2R)-2-phosphoglycerate = phosphoenolpyruvate + H2O. It participates in carbohydrate degradation; glycolysis; pyruvate from D-glyceraldehyde 3-phosphate: step 4/5. Functionally, catalyzes the reversible conversion of 2-phosphoglycerate (2-PG) into phosphoenolpyruvate (PEP). It is essential for the degradation of carbohydrates via glycolysis. The polypeptide is Enolase (Methanococcus maripaludis (strain DSM 14266 / JCM 13030 / NBRC 101832 / S2 / LL)).